Reading from the N-terminus, the 569-residue chain is uncharacterized protein (569 aa).

An N-terminal signal peptide occupies residues 1–22 (MSLLVKAALILKCASMLQGVSA). The tract at residues 498-541 (RETSILDSTNTTSTNATNTTTTTSSSSTASSSASASSSTSATSG) is disordered. Over residues 505 to 540 (STNTTSTNATNTTTTTSSSSTASSSASASSSTSATS) the composition is skewed to low complexity.

Its subcellular location is the secreted. The protein resides in the cell surface. This is an uncharacterized protein from Schizosaccharomyces pombe (strain 972 / ATCC 24843) (Fission yeast).